The sequence spans 137 residues: Small ribosomal subunit protein uS12 (137 aa).

The segment at 1–55 (MPTINQLVRKPRQSKIKKSDSPALNKGFNSKKKKFTDLNSPQKRGVCTRVGTMTP) is disordered. 3-methylthioaspartic acid is present on Asp102. Positions 118–137 (SGVDGRRQGRSLYGTKKPKN) are disordered.

The protein belongs to the universal ribosomal protein uS12 family. As to quaternary structure, part of the 30S ribosomal subunit. Contacts proteins S8 and S17. May interact with IF1 in the 30S initiation complex.

With S4 and S5 plays an important role in translational accuracy. In terms of biological role, interacts with and stabilizes bases of the 16S rRNA that are involved in tRNA selection in the A site and with the mRNA backbone. Located at the interface of the 30S and 50S subunits, it traverses the body of the 30S subunit contacting proteins on the other side and probably holding the rRNA structure together. The combined cluster of proteins S8, S12 and S17 appears to hold together the shoulder and platform of the 30S subunit. This chain is Small ribosomal subunit protein uS12, found in Staphylococcus aureus (strain Mu3 / ATCC 700698).